We begin with the raw amino-acid sequence, 151 residues long: Large ribosomal subunit protein bL9 (151 aa).

It belongs to the bacterial ribosomal protein bL9 family.

In terms of biological role, binds to the 23S rRNA. The sequence is that of Large ribosomal subunit protein bL9 from Pelodictyon phaeoclathratiforme (strain DSM 5477 / BU-1).